The chain runs to 589 residues: Serine/threonine-protein phosphatase 2A 65 kDa regulatory subunit A alpha isoform (589 aa).

Alanine 2 carries the N-acetylalanine modification. 15 HEAT repeats span residues aspartate 8–arginine 46, threonine 47–glutamate 84, tyrosine 85–aspartate 123, leucine 124–alanine 161, valine 162–asparagine 200, valine 201–aspartate 239, leucine 240–isoleucine 278, threonine 279–valine 321, isoleucine 322–asparagine 360, threonine 361–glutamine 399, leucine 400–phenylalanine 438, phenylalanine 439–tryptophan 477, alanine 478–isoleucine 516, threonine 517–threonine 555, and leucine 556–alanine 589. Residues aspartate 8 to glutamine 399 are PP2A subunit B binding. A polyoma small and medium T antigens Binding region spans residues threonine 47–valine 321. The segment at tyrosine 85–aspartate 239 is SV40 small T antigen binding. Position 280 is an N6-acetyllysine (lysine 280). The interval leucine 400–alanine 589 is PP2A subunit C binding.

It belongs to the phosphatase 2A regulatory subunit A family. PP2A consists of a common heterodimeric core enzyme, composed of PPP2CA a 36 kDa catalytic subunit (subunit C) and PPP2R1A a 65 kDa constant regulatory subunit (PR65 or subunit A), that associates with a variety of regulatory subunits. Proteins that associate with the core dimer include three families of regulatory subunits B (the R2/B/PR55/B55, R3/B''/PR72/PR130/PR59 and R5/B'/B56 families), the 48 kDa variable regulatory subunit, viral proteins, and cell signaling molecules. Found in a complex with at least ARL2, PPP2CB, PPP2R1A, PPP2R2A, PPP2R5E and TBCD. Interacts with the PP2A C catalytic subunit PPP2CA. Interacts with the PP2A B subunit PPP2R2A. Interacts with the PP2A B subunit PPP2R5D. Interacts with FOXO1; the interaction dephosphorylates FOXO1 on AKT-mediated phosphorylation sites. Interacts with IPO9. Interacts with TP53 and SGO1. Interacts with PLA2G16; this interaction might decrease PP2A activity. Interacts with CTTNBP2NL. Interacts with GNA12; the interaction promotes protein phosphatase 2A activation causing dephosphorylation of MAPT. Interacts with CIP2A; this interaction stabilizes CIP2A. Interacts with PABIR1/FAM122A. Interacts with ADCY8; antagonizes interaction between ADCY8 and calmodulin. Interacts with CRTC3 (when phosphorylated at 'Ser-391'). Interacts with SPRY2. Part of the core of STRIPAK complexes composed of PP2A catalytic and scaffolding subunits, the striatins (PP2A regulatory subunits), the striatin-associated proteins MOB4, STRIP1 and STRIP2, PDCD10 and members of the STE20 kinases, such as STK24 and STK26. Component of the Integrator-PP2A (INTAC) complex, composed of the Integrator core complex and protein phosphatase 2A subunits PPP2CA and PPP2R1A. In terms of assembly, (Microbial infection) Interacts with JC virus small t antigen; this interaction inhibits PPP2R1A activity.

Its subcellular location is the cytoplasm. The protein resides in the nucleus. The protein localises to the chromosome. It localises to the centromere. It is found in the lateral cell membrane. Its subcellular location is the cell projection. The protein resides in the dendrite. In terms of biological role, the PR65 subunit of protein phosphatase 2A serves as a scaffolding molecule to coordinate the assembly of the catalytic subunit and a variable regulatory B subunit. Upon interaction with GNA12 promotes dephosphorylation of microtubule associated protein TAU/MAPT. Required for proper chromosome segregation and for centromeric localization of SGO1 in mitosis. Together with RACK1 adapter, mediates dephosphorylation of AKT1 at 'Ser-473', preventing AKT1 activation and AKT-mTOR signaling pathway. Dephosphorylation of AKT1 is essential for regulatory T-cells (Treg) homeostasis and stability. Part of the striatin-interacting phosphatase and kinase (STRIPAK) complexes. STRIPAK complexes have critical roles in protein (de)phosphorylation and are regulators of multiple signaling pathways including Hippo, MAPK, nuclear receptor and cytoskeleton remodeling. Different types of STRIPAK complexes are involved in a variety of biological processes such as cell growth, differentiation, apoptosis, metabolism and immune regulation. Key mediator of a quality checkpoint during transcription elongation as part of the Integrator-PP2A (INTAC) complex. The INTAC complex drives premature transcription termination of transcripts that are unfavorably configured for transcriptional elongation: within the INTAC complex, acts as a scaffolding subunit for PPP2CA, which catalyzes dephosphorylation of the C-terminal domain (CTD) of Pol II subunit POLR2A/RPB1 and SUPT5H/SPT5, thereby preventing transcriptional elongation. Regulates the recruitment of the SKA complex to kinetochores. The sequence is that of Serine/threonine-protein phosphatase 2A 65 kDa regulatory subunit A alpha isoform from Homo sapiens (Human).